The chain runs to 331 residues: Phosphate acyltransferase (331 aa).

It belongs to the PlsX family. In terms of assembly, homodimer. Probably interacts with PlsY.

Its subcellular location is the cytoplasm. It carries out the reaction a fatty acyl-[ACP] + phosphate = an acyl phosphate + holo-[ACP]. It participates in lipid metabolism; phospholipid metabolism. Catalyzes the reversible formation of acyl-phosphate (acyl-PO(4)) from acyl-[acyl-carrier-protein] (acyl-ACP). This enzyme utilizes acyl-ACP as fatty acyl donor, but not acyl-CoA. The polypeptide is Phosphate acyltransferase (Lactococcus lactis subsp. cremoris (strain SK11)).